The primary structure comprises 394 residues: Elongation factor Tu 2 (394 aa).

The 196-residue stretch at 9-204 folds into the tr-type G domain; it reads KPHCNIGTIG…SIDDYIPQPT (196 aa). Residues 18–25 are G1; it reads GHVDHGKT. 18 to 25 is a GTP binding site; it reads GHVDHGKT. Position 25 (T25) interacts with Mg(2+). Positions 61-65 are G2; it reads GITIQ. The interval 82 to 85 is G3; sequence DCPG. GTP-binding positions include 82-86 and 137-140; these read DCPGH and NKID. Positions 137-140 are G4; the sequence is NKID. The tract at residues 174–176 is G5; that stretch reads SAL.

It belongs to the TRAFAC class translation factor GTPase superfamily. Classic translation factor GTPase family. EF-Tu/EF-1A subfamily. Monomer.

It localises to the cytoplasm. It carries out the reaction GTP + H2O = GDP + phosphate + H(+). In terms of biological role, GTP hydrolase that promotes the GTP-dependent binding of aminoacyl-tRNA to the A-site of ribosomes during protein biosynthesis. The protein is Elongation factor Tu 2 of Orientia tsutsugamushi (strain Boryong) (Rickettsia tsutsugamushi).